The sequence spans 617 residues: Glutamyl-tRNA(Gln) amidotransferase subunit B, mitochondrial (617 aa).

The transit peptide at 1–56 (MPRIPTSVLGKYLLSGQISRQGCVGARQITRHSALPSAAVSVANSARLLHVSSETV) directs the protein to the mitochondrion. Residues 53–90 (SETVPPPPAQPVPLRKQLKDEAKKAKKQGKKKSKGDSQ) form a disordered region. A compositionally biased stretch (basic residues) spans 76–85 (KAKKQGKKKS).

It belongs to the GatB/GatE family. GatB subfamily. Subunit of the heterotrimeric GatCAB amidotransferase (AdT) complex, composed of A, B and C subunits.

Its subcellular location is the mitochondrion. It catalyses the reaction L-glutamyl-tRNA(Gln) + L-glutamine + ATP + H2O = L-glutaminyl-tRNA(Gln) + L-glutamate + ADP + phosphate + H(+). Allows the formation of correctly charged Gln-tRNA(Gln) through the transamidation of misacylated Glu-tRNA(Gln) in the mitochondria. The reaction takes place in the presence of glutamine and ATP through an activated gamma-phospho-Glu-tRNA(Gln). The chain is Glutamyl-tRNA(Gln) amidotransferase subunit B, mitochondrial from Fusarium vanettenii (strain ATCC MYA-4622 / CBS 123669 / FGSC 9596 / NRRL 45880 / 77-13-4) (Fusarium solani subsp. pisi).